Consider the following 336-residue polypeptide: Thiamine thiazole synthase (336 aa).

Substrate-binding positions include Ala-89, 110–111, Gly-118, and Cys-183; that span reads ES. At Cys-219 the chain carries 2,3-didehydroalanine (Cys). Substrate is bound by residues Asp-221, His-236, Met-288, and 298 to 300; that span reads RMG.

This sequence belongs to the THI4 family. Homooctamer. The cofactor is Fe cation. In terms of processing, during the catalytic reaction, a sulfide is transferred from Cys-219 to a reaction intermediate, generating a dehydroalanine residue.

The protein localises to the cytoplasm. Its subcellular location is the nucleus. It catalyses the reaction [ADP-thiazole synthase]-L-cysteine + glycine + NAD(+) = [ADP-thiazole synthase]-dehydroalanine + ADP-5-ethyl-4-methylthiazole-2-carboxylate + nicotinamide + 3 H2O + 2 H(+). Its function is as follows. Involved in biosynthesis of the thiamine precursor thiazole. Catalyzes the conversion of NAD and glycine to adenosine diphosphate 5-(2-hydroxyethyl)-4-methylthiazole-2-carboxylic acid (ADT), an adenylated thiazole intermediate. The reaction includes an iron-dependent sulfide transfer from a conserved cysteine residue of the protein to a thiazole intermediate. The enzyme can only undergo a single turnover, which suggests it is a suicide enzyme. May have additional roles in adaptation to various stress conditions and in DNA damage tolerance. This Puccinia graminis f. sp. tritici (strain CRL 75-36-700-3 / race SCCL) (Black stem rust fungus) protein is Thiamine thiazole synthase.